We begin with the raw amino-acid sequence, 402 residues long: 4-hydroxy-3-methylbut-2-enyl diphosphate reductase (402 aa).

Position 66 (C66) interacts with [4Fe-4S] cluster. Position 96 (H96) interacts with (2E)-4-hydroxy-3-methylbut-2-enyl diphosphate. H96 contacts dimethylallyl diphosphate. Position 96 (H96) interacts with isopentenyl diphosphate. C157 serves as a coordination point for [4Fe-4S] cluster. Residue H185 participates in (2E)-4-hydroxy-3-methylbut-2-enyl diphosphate binding. Dimethylallyl diphosphate is bound at residue H185. An isopentenyl diphosphate-binding site is contributed by H185. The Proton donor role is filled by E187. T250 is a (2E)-4-hydroxy-3-methylbut-2-enyl diphosphate binding site. C288 serves as a coordination point for [4Fe-4S] cluster. Residues S317, S318, N319, and S379 each contribute to the (2E)-4-hydroxy-3-methylbut-2-enyl diphosphate site. S317, S318, N319, and S379 together coordinate dimethylallyl diphosphate. Residues S317, S318, N319, and S379 each contribute to the isopentenyl diphosphate site.

The protein belongs to the IspH family. The cofactor is [4Fe-4S] cluster.

It catalyses the reaction isopentenyl diphosphate + 2 oxidized [2Fe-2S]-[ferredoxin] + H2O = (2E)-4-hydroxy-3-methylbut-2-enyl diphosphate + 2 reduced [2Fe-2S]-[ferredoxin] + 2 H(+). The enzyme catalyses dimethylallyl diphosphate + 2 oxidized [2Fe-2S]-[ferredoxin] + H2O = (2E)-4-hydroxy-3-methylbut-2-enyl diphosphate + 2 reduced [2Fe-2S]-[ferredoxin] + 2 H(+). The protein operates within isoprenoid biosynthesis; dimethylallyl diphosphate biosynthesis; dimethylallyl diphosphate from (2E)-4-hydroxy-3-methylbutenyl diphosphate: step 1/1. Its pathway is isoprenoid biosynthesis; isopentenyl diphosphate biosynthesis via DXP pathway; isopentenyl diphosphate from 1-deoxy-D-xylulose 5-phosphate: step 6/6. Catalyzes the conversion of 1-hydroxy-2-methyl-2-(E)-butenyl 4-diphosphate (HMBPP) into a mixture of isopentenyl diphosphate (IPP) and dimethylallyl diphosphate (DMAPP). Acts in the terminal step of the DOXP/MEP pathway for isoprenoid precursor biosynthesis. This chain is 4-hydroxy-3-methylbut-2-enyl diphosphate reductase, found in Nostoc punctiforme (strain ATCC 29133 / PCC 73102).